Here is a 155-residue protein sequence, read N- to C-terminus: MGEAIEPIVTQELAGLGFDLVELRRGGSRARPVLEIRIDRRDEEKVTIDDCARVSRALEARLEAAALVGEQYVLEVSSPGADRPLRHAADWRRFVGRRATVTSGLLAGGKQEVEIVAVTGEGGAEVALVRDPKGREVSVPLREVSQARLAFNWKR.

It belongs to the RimP family.

The protein resides in the cytoplasm. Functionally, required for maturation of 30S ribosomal subunits. This chain is Ribosome maturation factor RimP, found in Gemmatimonas aurantiaca (strain DSM 14586 / JCM 11422 / NBRC 100505 / T-27).